The chain runs to 272 residues: Phosphatidylglycerol--prolipoprotein diacylglyceryl transferase (272 aa).

A run of 7 helical transmembrane segments spans residues Leu17–Gly37, Met59–Tyr79, Trp95–Phe115, Phe129–Gly149, Ser176–Ala196, Met202–Phe222, and Leu237–Trp257. Residue Arg142 coordinates a 1,2-diacyl-sn-glycero-3-phospho-(1'-sn-glycerol).

Belongs to the Lgt family.

It is found in the cell inner membrane. It catalyses the reaction L-cysteinyl-[prolipoprotein] + a 1,2-diacyl-sn-glycero-3-phospho-(1'-sn-glycerol) = an S-1,2-diacyl-sn-glyceryl-L-cysteinyl-[prolipoprotein] + sn-glycerol 1-phosphate + H(+). Its pathway is protein modification; lipoprotein biosynthesis (diacylglyceryl transfer). Functionally, catalyzes the transfer of the diacylglyceryl group from phosphatidylglycerol to the sulfhydryl group of the N-terminal cysteine of a prolipoprotein, the first step in the formation of mature lipoproteins. The chain is Phosphatidylglycerol--prolipoprotein diacylglyceryl transferase from Cupriavidus necator (strain ATCC 17699 / DSM 428 / KCTC 22496 / NCIMB 10442 / H16 / Stanier 337) (Ralstonia eutropha).